Reading from the N-terminus, the 66-residue chain is uncharacterized protein (66 aa).

This is an uncharacterized protein from Vaccinia virus (strain Copenhagen) (VACV).